Reading from the N-terminus, the 60-residue chain is Cytotoxin 3 (60 aa).

Cystine bridges form between C3-C21, C14-C38, C42-C53, and C54-C59.

It belongs to the three-finger toxin family. Short-chain subfamily. Type IA cytotoxin sub-subfamily. In terms of assembly, monomer in solution; Homodimer and oligomer in the presence of negatively charged lipids forming a pore with a size ranging between 20 and 30 Angstroms. As to expression, expressed by the venom gland.

It is found in the secreted. The protein localises to the target cell membrane. Shows cytolytic activity on many different cells by forming pore in lipid membranes. In vivo, increases heart rate or kills the animal by cardiac arrest. In addition, it binds to heparin with high affinity, interacts with Kv channel-interacting protein 1 (KCNIP1) in a calcium-independent manner, and binds to integrin alpha-V/beta-3 (ITGAV/ITGB3) with moderate affinity. In Naja naja (Indian cobra), this protein is Cytotoxin 3.